A 321-amino-acid polypeptide reads, in one-letter code: L-carnitine dehydrogenase (321 aa).

14–19 (GSGVIG) provides a ligand contact to NAD(+).

The protein belongs to the 3-hydroxyacyl-CoA dehydrogenase family. L-carnitine dehydrogenase subfamily. In terms of assembly, homodimer.

It localises to the cytoplasm. It carries out the reaction carnitine + NAD(+) = 3-dehydrocarnitine + NADH + H(+). The protein operates within amine and polyamine metabolism; carnitine metabolism. Analogs of L-carnitine such as D-carnitine, glycine betaine and choline, are competitive inhibitors of L-carnitine oxidation. Its function is as follows. Catalyzes the NAD(+)-dependent oxidation of L-carnitine to 3-dehydrocarnitine. Is specific for L-carnitine and NAD(+) as substrates. D,L-3-hydroxybutyrate, L-lactate, ethanol, L-malate and D,L-isocitrate are not substrates. Is involved in a L-carnitine degradation pathway that allows P.aeruginosa to grow on L-carnitine as the sole source of carbon and nitrogen. This Pseudomonas aeruginosa (strain ATCC 15692 / DSM 22644 / CIP 104116 / JCM 14847 / LMG 12228 / 1C / PRS 101 / PAO1) protein is L-carnitine dehydrogenase.